A 642-amino-acid polypeptide reads, in one-letter code: Threonine--tRNA ligase (642 aa).

A TGS domain is found at 1–61; it reads MPVITLPDGS…ENDAQLSIIT (61 aa). The tract at residues 243 to 534 is catalytic; it reads DHRKIGKQLD…LTEEFAGFFP (292 aa). 3 residues coordinate Zn(2+): Cys-334, His-385, and His-511.

It belongs to the class-II aminoacyl-tRNA synthetase family. In terms of assembly, homodimer. It depends on Zn(2+) as a cofactor.

Its subcellular location is the cytoplasm. The catalysed reaction is tRNA(Thr) + L-threonine + ATP = L-threonyl-tRNA(Thr) + AMP + diphosphate + H(+). In terms of biological role, catalyzes the attachment of threonine to tRNA(Thr) in a two-step reaction: L-threonine is first activated by ATP to form Thr-AMP and then transferred to the acceptor end of tRNA(Thr). Also edits incorrectly charged L-seryl-tRNA(Thr). The sequence is that of Threonine--tRNA ligase from Enterobacter sp. (strain 638).